The chain runs to 546 residues: Probable protein kinase UbiB (546 aa).

Residues 123–501 enclose the Protein kinase domain; sequence DFDETPLASA…SRRQGQARYL (379 aa). Residues 129–137 and K152 contribute to the ATP site; that span reads LASASIAQV. D287 serves as the catalytic Proton acceptor. A run of 2 helical transmembrane segments spans residues 496–516 and 521–541; these read GQARYLLGVGASLLLVGVFLL and HIEWGQISLAGAGLCWLLGWF.

It belongs to the ABC1 family. UbiB subfamily.

It localises to the cell inner membrane. The protein operates within cofactor biosynthesis; ubiquinone biosynthesis [regulation]. Its function is as follows. Is probably a protein kinase regulator of UbiI activity which is involved in aerobic coenzyme Q (ubiquinone) biosynthesis. The protein is Probable protein kinase UbiB of Aeromonas salmonicida (strain A449).